The primary structure comprises 346 residues: MNLQGKNVTLHDMSLRDGMHAKRHQISLEQMIAVATGLDAAGMPLIEITHGDGLGGRSINYGFPAHSDEEYLRAVIPRLKQAKVSALLLPGIGTVDHLKMALDCGVSTIRVATHCTEADVSEQHIGMSRKLGADTVGFLMMAHMISAEKVLEQARLMESYGANCIYCTDSAGYMLPDEVSEKIGLLRAELNPATEIGFHGHHNMGMAIANSLAAIEAGASRIDGSVAGLGAGAGNTPLEVFVAVCKRMGVETGIDLYKIMDVAEDIVVPMMDQPIRVDRDALTLGYAGVYSSFLLFAQRAEKKYGVPARDILVELGRRGTVGGQEDMIEDLALDMSRARQNQKVSA.

One can recognise a Pyruvate carboxyltransferase domain in the interval 8 to 260 (VTLHDMSLRD…ETGIDLYKIM (253 aa)). Substrate is bound at residue 16–17 (RD). D17 is a binding site for Mn(2+). The active-site Proton acceptor is H20. Substrate is bound by residues S170 and H199. Residues H199 and H201 each coordinate Mn(2+). Position 290 (Y290) interacts with substrate.

This sequence belongs to the 4-hydroxy-2-oxovalerate aldolase family.

The enzyme catalyses (S)-4-hydroxy-2-oxopentanoate = acetaldehyde + pyruvate. This Stutzerimonas stutzeri (Pseudomonas stutzeri) protein is 4-hydroxy-2-oxovalerate aldolase (nahM).